Here is a 451-residue protein sequence, read N- to C-terminus: MHQAGASTRRLHGVAILSTLKSMSTTPRGRIAVISMHTSPIEQPGVGDAGGMNVYIRSTSLELGALGYEVDIFTRATRSSQGKIVQLAPNVRLINIIAGPYEGLSKEELPTQMVAFTSGIIEFAQCEKVSYSLIHSHYWMSGQVGWLLRDLWRVPQVHTAHTLALVKNSALATGDRPEPESRRICEQQIVDNADRLVVNTEAGKDNLVFHYDADPEHIDVVLPGADVTQFSPGSDRATERSRRELGVPLHATVIAFVGRMQRLKGPQVLLRAVANMMKKHPDQELRVLMCGGPSGNGLARPTEFEDLARDLGIDPIVRFLAPRPPEDLASVYRAADIVAIPSYNESFGLVAVEAQASGTPVVAARAGGLPITIDDGTSGILVDGHDPADWATALQSLCDDDDRRIAMGENATDHASRFSWASSARHLSDIYEDAIRKGPHVRCGSDRAGAS.

H37 contacts 1D-myo-inositol 3-phosphate. Residues 43 to 44 (QP) and G51 contribute to the UDP-N-acetyl-alpha-D-glucosamine site. Residues 48–53 (DAGGMN), K106, Y138, T162, and R182 each bind 1D-myo-inositol 3-phosphate. UDP-N-acetyl-alpha-D-glucosamine is bound by residues R259, K264, and R323. Y332, R333, and A335 together coordinate Mg(2+). UDP-N-acetyl-alpha-D-glucosamine-binding residues include E345 and E353. Position 359 (T359) interacts with Mg(2+).

It belongs to the glycosyltransferase group 1 family. MshA subfamily. In terms of assembly, homodimer.

It catalyses the reaction 1D-myo-inositol 3-phosphate + UDP-N-acetyl-alpha-D-glucosamine = 1D-myo-inositol 2-acetamido-2-deoxy-alpha-D-glucopyranoside 3-phosphate + UDP + H(+). In terms of biological role, catalyzes the transfer of a N-acetyl-glucosamine moiety to 1D-myo-inositol 3-phosphate to produce 1D-myo-inositol 2-acetamido-2-deoxy-glucopyranoside 3-phosphate in the mycothiol biosynthesis pathway. The polypeptide is D-inositol 3-phosphate glycosyltransferase (Corynebacterium kroppenstedtii (strain DSM 44385 / JCM 11950 / CIP 105744 / CCUG 35717)).